The chain runs to 156 residues: Small ribosomal subunit protein uS7 (156 aa).

Belongs to the universal ribosomal protein uS7 family. Part of the 30S ribosomal subunit. Contacts proteins S9 and S11.

One of the primary rRNA binding proteins, it binds directly to 16S rRNA where it nucleates assembly of the head domain of the 30S subunit. Is located at the subunit interface close to the decoding center, probably blocks exit of the E-site tRNA. The chain is Small ribosomal subunit protein uS7 from Rhodococcus erythropolis (strain PR4 / NBRC 100887).